The primary structure comprises 574 residues: Optineurin (574 aa).

The segment at 1–33 (MSHQPLSCLTEKGDSPTETTGNGPPTLAHPNLD) is disordered. The stretch at 38–170 (HELLQQMREL…VSELQLKLNS (133 aa)) forms a coiled coil. Residues 58 to 209 (MKLNNQAMKG…GPIRTDSIDT (152 aa)) form an interaction with Rab8 region. Residues 176–181 (DSFVEI) carry the LIR motif. Serine 177 is subject to Phosphoserine; by TBK1. Position 198 is a phosphoserine (serine 198). Positions 233–496 (CLREGNQKVE…ALQLAVLLKD (264 aa)) form a coiled coil. Residues 262–286 (AKDRSETETQTEEHKEQEKEEEKSP) show a composition bias toward basic and acidic residues. The interval 262 to 292 (AKDRSETETQTEEHKEQEKEEEKSPETVGSE) is disordered. Phosphoserine is present on serine 336. Residues 405 to 574 (KRRESEKVDK…LLIHVTDCII (170 aa)) form an interaction with HD region. An interaction with MYO6 region spans residues 406 to 515 (RRESEKVDKV…RQSLMEMQSR (110 aa)). The UBAN signature appears at 468–473 (DFHAER). Phosphoserine is present on serine 521. Residues 544–574 (QQNIPIHSCPKCGEVLPDIDTLLIHVTDCII) form a CCHC NOA-type zinc finger. Zn(2+)-binding residues include cysteine 552, cysteine 555, histidine 568, and cysteine 572.

In terms of assembly, self-associates. Interacts with HD. Interacts with GTF3A. Interacts with MYO6. Interacts (via UBAN) with ubiquitinated TFRC. Interacts with GTP-bound Rab8 (RAB8A and/or RAB8B). Interacts with TBC1D17. Interacts with TBK1. Interacts with TRAF3. Binds to linear ubiquitin chains. Interacts with LC3 family members MAP1LC3A, MAP1LC3B, GABARAP, GABARAPL1 and GABARAPL2; OPTN phosphorylation increases the association (at least with MAP1LC3B). Interacts with RAB12; the interaction may be indirect. Interacts with TBK1; this interaction leads to the Golgi localization of TBK1 and its subsequent activation. Interacts with palmitoyltransferase ZDHHC17/HIP14; the interaction does not lead to palmitoylation of OPTN. Interacts with CYLD. Interacts with TOM1; the interaction is indirect and is mediated by MYO6, which acts as a bridge between TOM1 and OPTN. Interacts with USP12; the interaction is independent of USP12 deubiquitinase activity and may be involved in regulation of autophagic flux. Phosphorylated by TBK1, leading to restrict bacterial proliferation in case of infection. Present in aqueous humor of the eye (at protein level). Expressed in trabecular meshwork and astrocytes.

The protein localises to the cytoplasm. Its subcellular location is the perinuclear region. It is found in the golgi apparatus. It localises to the trans-Golgi network. The protein resides in the cytoplasmic vesicle. The protein localises to the autophagosome. Its subcellular location is the recycling endosome. Its function is as follows. Plays an important role in the maintenance of the Golgi complex, in membrane trafficking, in exocytosis, through its interaction with myosin VI and Rab8. Links myosin VI to the Golgi complex and plays an important role in Golgi ribbon formation. Negatively regulates the induction of IFNB in response to RNA virus infection. Plays a neuroprotective role in the eye and optic nerve. Probably part of the TNF-alpha signaling pathway that can shift the equilibrium toward induction of cell death. May act by regulating membrane trafficking and cellular morphogenesis via a complex that contains Rab8 and huntingtin (HD). Mediates the interaction of Rab8 with the probable GTPase-activating protein TBC1D17 during Rab8-mediated endocytic trafficking, such as that of transferrin receptor (TFRC/TfR); regulates Rab8 recruitment to tubules emanating from the endocytic recycling compartment. Autophagy receptor that interacts directly with both the cargo to become degraded and an autophagy modifier of the MAP1 LC3 family; targets ubiquitin-coated bacteria (xenophagy) and appears to function in the same pathway as SQSTM1 and CALCOCO2/NDP52. This is Optineurin (OPTN) from Sus scrofa (Pig).